Here is a 307-residue protein sequence, read N- to C-terminus: L-lactate dehydrogenase (307 aa).

NAD(+) is bound by residues V13, D34, R39, Y64, and 78 to 79; that span reads GV. A substrate-binding site is contributed by R87. Residue S100 coordinates NAD(+). Substrate is bound at residue 119–122; it reads NPVD. T142 lines the NAD(+) pocket. Residue 147–150 participates in substrate binding; sequence DSAR. Residue H174 is the Proton acceptor of the active site. Substrate is bound at residue T224.

Belongs to the LDH/MDH superfamily. LDH family. In terms of assembly, homotetramer.

The protein localises to the cytoplasm. The enzyme catalyses (S)-lactate + NAD(+) = pyruvate + NADH + H(+). It participates in fermentation; pyruvate fermentation to lactate; (S)-lactate from pyruvate: step 1/1. Catalyzes the conversion of lactate to pyruvate. This Lactobacillus delbrueckii subsp. bulgaricus (strain ATCC BAA-365 / Lb-18) protein is L-lactate dehydrogenase.